The primary structure comprises 290 residues: Nucleotide-binding protein LAR_0375 (290 aa).

13–20 (GMSGAGKT) contacts ATP. Residue 63 to 66 (DMRS) coordinates GTP.

Belongs to the RapZ-like family.

Displays ATPase and GTPase activities. The chain is Nucleotide-binding protein LAR_0375 from Limosilactobacillus reuteri subsp. reuteri (strain JCM 1112) (Lactobacillus reuteri).